Consider the following 313-residue polypeptide: 1-phosphofructokinase (313 aa).

ATP-binding positions include 222-227 (SMGAKG) and 254-255 (GD). Residue Asp-255 is the Proton acceptor of the active site.

It belongs to the carbohydrate kinase PfkB family.

The enzyme catalyses beta-D-fructose 1-phosphate + ATP = beta-D-fructose 1,6-bisphosphate + ADP + H(+). In terms of biological role, catalyzes the ATP-dependent phosphorylation of fructose-l-phosphate to fructose-l,6-bisphosphate. The chain is 1-phosphofructokinase (fruK) from Haemophilus influenzae (strain ATCC 51907 / DSM 11121 / KW20 / Rd).